A 193-amino-acid polypeptide reads, in one-letter code: Holliday junction branch migration complex subunit RuvA (193 aa).

A domain I region spans residues 1 to 64 (MIGRIAGTLL…EDAHLLYGFL (64 aa)). The interval 65-139 (TPQERSTFRE…GKLGADLGPL (75 aa)) is domain II. The tract at residues 139–143 (LAGAA) is flexible linker. The domain III stretch occupies residues 144–193 (SPSDHAADILNALLALGYSEKEALAAIKNVPAGTGVSEGIKLSLKALSKA).

Belongs to the RuvA family. Homotetramer. Forms an RuvA(8)-RuvB(12)-Holliday junction (HJ) complex. HJ DNA is sandwiched between 2 RuvA tetramers; dsDNA enters through RuvA and exits via RuvB. An RuvB hexamer assembles on each DNA strand where it exits the tetramer. Each RuvB hexamer is contacted by two RuvA subunits (via domain III) on 2 adjacent RuvB subunits; this complex drives branch migration. In the full resolvosome a probable DNA-RuvA(4)-RuvB(12)-RuvC(2) complex forms which resolves the HJ.

It is found in the cytoplasm. In terms of biological role, the RuvA-RuvB-RuvC complex processes Holliday junction (HJ) DNA during genetic recombination and DNA repair, while the RuvA-RuvB complex plays an important role in the rescue of blocked DNA replication forks via replication fork reversal (RFR). RuvA specifically binds to HJ cruciform DNA, conferring on it an open structure. The RuvB hexamer acts as an ATP-dependent pump, pulling dsDNA into and through the RuvAB complex. HJ branch migration allows RuvC to scan DNA until it finds its consensus sequence, where it cleaves and resolves the cruciform DNA. This chain is Holliday junction branch migration complex subunit RuvA, found in Burkholderia thailandensis (strain ATCC 700388 / DSM 13276 / CCUG 48851 / CIP 106301 / E264).